The sequence spans 702 residues: Pheromone-processing carboxypeptidase KEX1 (702 aa).

An N-terminal signal peptide occupies residues 1 to 19 (MKLILSTLIVFIHTLLVSA). The Lumenal segment spans residues 20-555 (LPTKEGSDPN…SDSTSSKFTR (536 aa)). N-linked (GlcNAc...) asparagine glycans are attached at residues Asn-85 and Asn-122. Residues Ser-184 and Asp-394 contribute to the active site. Asn-441 and Asn-449 each carry an N-linked (GlcNAc...) asparagine glycan. Residue His-452 is part of the active site. The interval 491–531 (SRKESDASANGEENAGSDKVPGDSPSQTMDPMISSSTASSS) is disordered. A helical transmembrane segment spans residues 556–576 (LIQLAVILVIFWGVYVLYASY). Topologically, residues 577 to 702 (KSRPSSIIKK…THNQKQKPMN (126 aa)) are cytoplasmic. Disordered regions lie at residues 582–603 (SIIK…GKKK) and 659–702 (DIEL…KPMN). Polar residues-rich tracts occupy residues 587-598 (PTNNTSNVTRSS) and 692-702 (ATHNQKQKPMN).

This sequence belongs to the peptidase S10 family.

It localises to the golgi apparatus. It is found in the trans-Golgi network membrane. The enzyme catalyses Preferential release of a C-terminal arginine or lysine residue.. Protease with a carboxypeptidase B-like function involved in the C-terminal processing of the lysine and arginine residues from protein precursors. Promotes cell fusion and is involved in the programmed cell death. The chain is Pheromone-processing carboxypeptidase KEX1 (KEX1) from Candida albicans (strain WO-1) (Yeast).